The sequence spans 202 residues: Superoxide dismutase [Mn/Fe] (202 aa).

Residues H27, H81, D163, and H167 each contribute to the Fe(3+) site. H27, H81, D163, and H167 together coordinate Mn(2+).

This sequence belongs to the iron/manganese superoxide dismutase family. The cofactor is Mn(2+). It depends on Fe(3+) as a cofactor.

The catalysed reaction is 2 superoxide + 2 H(+) = H2O2 + O2. Its function is as follows. Destroys superoxide anion radicals which are normally produced within the cells and which are toxic to biological systems. Catalyzes the dismutation of superoxide anion radicals into O2 and H2O2 by successive reduction and oxidation of the transition metal ion at the active site. The sequence is that of Superoxide dismutase [Mn/Fe] (sodA) from Streptococcus agalactiae serotype V (strain ATCC BAA-611 / 2603 V/R).